We begin with the raw amino-acid sequence, 588 residues long: Pescadillo homolog (588 aa).

The tract at residues 1 to 54 (MGGLEKKKYERGSATNYITRNKARKKLQLSLADFRRLCILKGIYPHEPKHKKKV) is required for 28S ribosomal RNA processing. The tract at residues 1-257 (MGGLEKKKYE…PKLEGQAQAE (257 aa)) is sufficient for nucleolar localization. K98 bears the N6-acetyllysine mark. Residues 294 to 314 (EAEVDEFPTDGEMSAQEEDRR) form a disordered region. A sufficient for interaction with MAP1B region spans residues 306 to 415 (MSAQEEDRRK…LLLPVAEYFS (110 aa)). Positions 322–415 (KHKKLFEGLK…LLLPVAEYFS (94 aa)) constitute a BRCT domain. The interval 448–515 (GEDPGNLNES…GKKPRVMAGT (68 aa)) is disordered. Residues 456 to 486 (ESEEEEEEDDNNEGDGDEEGENEEEEEDAEA) are compositionally biased toward acidic residues. Residues 487–508 (GSEKEEEARLAALEEQRMEGKK) are compositionally biased toward basic and acidic residues. K517 is covalently cross-linked (Glycyl lysine isopeptide (Lys-Gly) (interchain with G-Cter in SUMO1); alternate). K517 participates in a covalent cross-link: Glycyl lysine isopeptide (Lys-Gly) (interchain with G-Cter in SUMO2); alternate. The interval 539–588 (MMKKREKYLYQKIMFGKRRKIREANKLAEKRKAHDEAVRSEKKAKKARPE) is required for 28S ribosomal RNA processing. Residues 565 to 588 (LAEKRKAHDEAVRSEKKAKKARPE) form a disordered region.

It belongs to the pescadillo family. As to quaternary structure, component of the PeBoW complex, composed of BOP1, PES1 and WDR12. The complex is held together by BOP1, which interacts with PES1 via its N-terminal domain and with WDR12 via a high-affinity interaction between the seven-bladed beta-propeller domains of the 2 proteins. The PeBoW complex associates with the 66S pre-ribosome. The PeBoW complex also associates with DDX27, PES1 interacts directly with DDX27. Interacts with IRS1 and UBTF. May interact with MAP1B. In terms of processing, sumoylated. Significant levels are detected in a variety of cancer cell lines, including glioblastoma, breast carcinoma, colon carcinoma and cervical carcinoma cells. Levels are abnormally elevated in malignant tumors of astrocytic origin.

It is found in the nucleus. Its subcellular location is the nucleolus. The protein resides in the nucleoplasm. It localises to the chromosome. Component of the PeBoW complex, which is required for maturation of 28S and 5.8S ribosomal RNAs and formation of the 60S ribosome. In Homo sapiens (Human), this protein is Pescadillo homolog.